The chain runs to 487 residues: MTIAEWRQRLNNREISSLELVNEQFARIKDVDNKLHAFLKLEEDSARENAKRIDEARLSGKELPPLAGIPFAIKDNLCTKGVKTTCSSKMLESFVPPYESTVTQRLWEAGAILLGKTNLDEFAMGSSTETSAFGATSNPWDLSRVPGGSSGGSAAAVASGLCLAALGSDTGGSIRQPASFCGVVGLKPTYGRVSRWGLVAFASSLDQVGPFTTSVEDAAEVLQVIAGKDPLDSTCLDKPVPNFSEYFSDSIKGLRIGLIKECFEQEGISLEVKESVLKAANQLQSLGAELIDVSCPRFNDGIATYYVIAPSEASANLARYDGVKYGYRQHGEENLSAMTSLSRAKGFGSEVQRRILIGTYALSAGYFDAYYKKAQKVRTLISRDFANSFEKVDLLLTPTSPSTAFKAGSHDNDPLAMYLSDLLTIPVNLAGLPAISVPCGFDKEGLPIGLQLIGDVLGEQRLLQVAHHYEQAANVMGNCPKGDLIPA.

Catalysis depends on charge relay system residues K74 and S149. The active-site Acyl-ester intermediate is the S173.

It belongs to the amidase family. GatA subfamily. As to quaternary structure, heterotrimer of A, B and C subunits.

It carries out the reaction L-glutamyl-tRNA(Gln) + L-glutamine + ATP + H2O = L-glutaminyl-tRNA(Gln) + L-glutamate + ADP + phosphate + H(+). Its function is as follows. Allows the formation of correctly charged Gln-tRNA(Gln) through the transamidation of misacylated Glu-tRNA(Gln) in organisms which lack glutaminyl-tRNA synthetase. The reaction takes place in the presence of glutamine and ATP through an activated gamma-phospho-Glu-tRNA(Gln). This Prochlorococcus marinus (strain MIT 9211) protein is Glutamyl-tRNA(Gln) amidotransferase subunit A.